The sequence spans 162 residues: Interleukin-15 (162 aa).

A signal peptide spans 1–29 (MKILKPYMRNTSISCYLCFLLNSHFLTEA). Residues 30–48 (GIHVFILGCVSVGLPKTEA) constitute a propeptide that is removed on maturation. 2 disulfides stabilise this stretch: Cys-83/Cys-133 and Cys-90/Cys-136. Residues Asn-104, Asn-108, and Asn-119 are each glycosylated (N-linked (GlcNAc...) asparagine).

Belongs to the IL-15/IL-21 family.

The protein localises to the secreted. In terms of biological role, cytokine that plays a major role in the development of inflammatory and protective immune responses to microbial invaders and parasites by modulating immune cells of both the innate and adaptive immune systems. Stimulates the proliferation and activation of natural killer cells, T-cells and B-cells and promotes the secretion of several cytokines. In monocytes, induces the production of IL8 and monocyte chemotactic protein 1/CCL2, two chemokines that attract neutrophils and monocytes respectively to sites of infection. Unlike most cytokines, which are secreted in soluble form, IL15 is expressed in association with its high affinity IL15RA on the surface of IL15-producing cells and delivers signals to target cells that express IL2RB and IL2RG receptor subunits. Binding to its receptor triggers the phosphorylation of JAK1 and JAK3 and the recruitment and subsequent phosphorylation of signal transducer and activator of transcription-3/STAT3 and STAT5. In mast cells, induces the rapid tyrosine phosphorylation of STAT6 and thereby controls mast cell survival and release of cytokines such as IL4. This is Interleukin-15 (Il15) from Mus musculus (Mouse).